A 317-amino-acid polypeptide reads, in one-letter code: Aspartate carbamoyltransferase catalytic subunit (317 aa).

The carbamoyl phosphate site is built by Arg66 and Thr67. Lys94 lines the L-aspartate pocket. 3 residues coordinate carbamoyl phosphate: Arg116, His144, and Gln147. Arg177 and Arg231 together coordinate L-aspartate. Residues Gly272 and Pro273 each contribute to the carbamoyl phosphate site.

This sequence belongs to the aspartate/ornithine carbamoyltransferase superfamily. ATCase family. Heterododecamer (2C3:3R2) of six catalytic PyrB chains organized as two trimers (C3), and six regulatory PyrI chains organized as three dimers (R2).

The enzyme catalyses carbamoyl phosphate + L-aspartate = N-carbamoyl-L-aspartate + phosphate + H(+). It functions in the pathway pyrimidine metabolism; UMP biosynthesis via de novo pathway; (S)-dihydroorotate from bicarbonate: step 2/3. In terms of biological role, catalyzes the condensation of carbamoyl phosphate and aspartate to form carbamoyl aspartate and inorganic phosphate, the committed step in the de novo pyrimidine nucleotide biosynthesis pathway. This chain is Aspartate carbamoyltransferase catalytic subunit, found in Nitrobacter winogradskyi (strain ATCC 25391 / DSM 10237 / CIP 104748 / NCIMB 11846 / Nb-255).